The primary structure comprises 608 residues: CTP synthase (608 aa).

The tract at residues 1 to 271 is amidoligase domain; that stretch reads MGQAHITKHI…DAYVVRRLGL (271 aa). Ser-18 lines the CTP pocket. UTP is bound at residue Ser-18. ATP is bound by residues 19-24 and Asp-76; that span reads SLGKGL. Mg(2+) contacts are provided by Asp-76 and Glu-145. Residues 152-154, 192-197, and Lys-228 contribute to the CTP site; these read DIE and KTKPTQ. UTP-binding positions include 192–197 and Lys-228; that span reads KTKPTQ. Residues 296-545 enclose the Glutamine amidotransferase type-1 domain; that stretch reads TIAIVGKYVD…VAAAVAHADR (250 aa). Gly-359 is an L-glutamine binding site. The Nucleophile; for glutamine hydrolysis role is filled by Cys-386. Residues 387-390, Glu-410, and Arg-471 each bind L-glutamine; that span reads LGLQ. Active-site residues include His-518 and Glu-520. The disordered stretch occupies residues 550 to 608; it reads LPVDLPSEDAPTPENGVPENGAAQTRGVTAGRSGGSIRRGASASRPSVSSNGTAALVSP. The segment covering 584–594 has biased composition (low complexity); sequence GSIRRGASASR.

The protein belongs to the CTP synthase family. As to quaternary structure, homotetramer.

It catalyses the reaction UTP + L-glutamine + ATP + H2O = CTP + L-glutamate + ADP + phosphate + 2 H(+). It carries out the reaction L-glutamine + H2O = L-glutamate + NH4(+). The catalysed reaction is UTP + NH4(+) + ATP = CTP + ADP + phosphate + 2 H(+). Its pathway is pyrimidine metabolism; CTP biosynthesis via de novo pathway; CTP from UDP: step 2/2. Allosterically activated by GTP, when glutamine is the substrate; GTP has no effect on the reaction when ammonia is the substrate. The allosteric effector GTP functions by stabilizing the protein conformation that binds the tetrahedral intermediate(s) formed during glutamine hydrolysis. Inhibited by the product CTP, via allosteric rather than competitive inhibition. Functionally, catalyzes the ATP-dependent amination of UTP to CTP with either L-glutamine or ammonia as the source of nitrogen. Regulates intracellular CTP levels through interactions with the four ribonucleotide triphosphates. The sequence is that of CTP synthase from Frankia casuarinae (strain DSM 45818 / CECT 9043 / HFP020203 / CcI3).